A 320-amino-acid polypeptide reads, in one-letter code: UDP-3-O-acyl-N-acetylglucosamine deacetylase (320 aa).

Positions 92, 251, and 255 each coordinate Zn(2+). Histidine 278 functions as the Proton donor in the catalytic mechanism.

It belongs to the LpxC family. Requires Zn(2+) as cofactor.

It carries out the reaction a UDP-3-O-[(3R)-3-hydroxyacyl]-N-acetyl-alpha-D-glucosamine + H2O = a UDP-3-O-[(3R)-3-hydroxyacyl]-alpha-D-glucosamine + acetate. The protein operates within glycolipid biosynthesis; lipid IV(A) biosynthesis; lipid IV(A) from (3R)-3-hydroxytetradecanoyl-[acyl-carrier-protein] and UDP-N-acetyl-alpha-D-glucosamine: step 2/6. Functionally, catalyzes the hydrolysis of UDP-3-O-myristoyl-N-acetylglucosamine to form UDP-3-O-myristoylglucosamine and acetate, the committed step in lipid A biosynthesis. This is UDP-3-O-acyl-N-acetylglucosamine deacetylase from Psychrobacter arcticus (strain DSM 17307 / VKM B-2377 / 273-4).